Here is a 33-residue protein sequence, read N- to C-terminus: Dermonecrotic toxin LiSicTox-alphaI-1 (33 aa).

Position 32 (Glu32) interacts with Mg(2+).

It belongs to the arthropod phospholipase D family. Class II subfamily. Mg(2+) is required as a cofactor. Post-translationally, contains 2 disulfide bonds. Expressed by the venom gland.

The protein localises to the secreted. The enzyme catalyses an N-(acyl)-sphingosylphosphocholine = an N-(acyl)-sphingosyl-1,3-cyclic phosphate + choline. The catalysed reaction is an N-(acyl)-sphingosylphosphoethanolamine = an N-(acyl)-sphingosyl-1,3-cyclic phosphate + ethanolamine. It catalyses the reaction a 1-acyl-sn-glycero-3-phosphocholine = a 1-acyl-sn-glycero-2,3-cyclic phosphate + choline. It carries out the reaction a 1-acyl-sn-glycero-3-phosphoethanolamine = a 1-acyl-sn-glycero-2,3-cyclic phosphate + ethanolamine. Dermonecrotic toxins cleave the phosphodiester linkage between the phosphate and headgroup of certain phospholipids (sphingolipid and lysolipid substrates), forming an alcohol (often choline) and a cyclic phosphate. This toxin acts on sphingomyelin (SM). It may also act on ceramide phosphoethanolamine (CPE), lysophosphatidylcholine (LPC) and lysophosphatidylethanolamine (LPE), but not on lysophosphatidylserine (LPS), and lysophosphatidylglycerol (LPG). It acts by transphosphatidylation, releasing exclusively cyclic phosphate products as second products. In vivo, intradermal injection induces dermonecrosis. Induces hemolysis, increased vascular permeability, edema, inflammatory response, and platelet aggregation. The protein is Dermonecrotic toxin LiSicTox-alphaI-1 of Loxosceles intermedia (Brown spider).